The sequence spans 696 residues: Elongation factor G (696 aa).

Positions 8–288 (EDYRNFGIMA…AVVEYLPSPA (281 aa)) constitute a tr-type G domain. GTP is bound by residues 17-24 (AHIDAGKT), 86-90 (DTPGH), and 140-143 (NKMD).

This sequence belongs to the TRAFAC class translation factor GTPase superfamily. Classic translation factor GTPase family. EF-G/EF-2 subfamily.

Its subcellular location is the cytoplasm. Its function is as follows. Catalyzes the GTP-dependent ribosomal translocation step during translation elongation. During this step, the ribosome changes from the pre-translocational (PRE) to the post-translocational (POST) state as the newly formed A-site-bound peptidyl-tRNA and P-site-bound deacylated tRNA move to the P and E sites, respectively. Catalyzes the coordinated movement of the two tRNA molecules, the mRNA and conformational changes in the ribosome. In Mesorhizobium japonicum (strain LMG 29417 / CECT 9101 / MAFF 303099) (Mesorhizobium loti (strain MAFF 303099)), this protein is Elongation factor G.